Reading from the N-terminus, the 148-residue chain is Receptor activity-modifying protein 1 (148 aa).

Residues 1-26 (MVRVLRGLPWRGLWLLLAHQLFLVTA) form the signal peptide. 3 disulfides stabilise this stretch: Cys-27–Cys-82, Cys-40–Cys-72, and Cys-57–Cys-104. Over 27 to 118 (CQDAHYGTLM…RALGDPPSTI (92 aa)) the chain is Extracellular. The helical transmembrane segment at 119–140 (LCPFVVLPITVTLLVTALVVWR) threads the bilayer. Residues 141–148 (SKRAESIV) are Cytoplasmic-facing.

This sequence belongs to the RAMP family. Heterodimer of CALCRL and RAMP1; the interaction induces allosteric modulation of CALCRL function and CGRP1/CALCA and CGRP2/CALCB ligand specificity. Heterodimer of CALCR and RAMP1; interaction forms the AMYR1 receptor complex for amylin/IAPP and CGRP1/CALCA ligands.

It is found in the cell membrane. Functionally, accessory protein that interacts with and modulates the function of G-protein coupled receptors including calcitonin gene-related peptide type 1 receptor (CALCRL) and calcitonin receptor (CALCR). Required for the transport of CALCRL to the plasma membrane. Together with CALCRL, form the receptor complex for the calcitonin gene-related peptides CGRP1/CALCA and CGRP2/CALCB. Together with CALCR, form the AMYR1 receptor complex for amylin/IAPP and CGRP1/CALCA. In Cavia porcellus (Guinea pig), this protein is Receptor activity-modifying protein 1 (RAMP1).